Here is a 435-residue protein sequence, read N- to C-terminus: Enolase (435 aa).

(2R)-2-phosphoglycerate is bound at residue glutamine 167. Catalysis depends on glutamate 209, which acts as the Proton donor. Positions 246, 292, and 319 each coordinate Mg(2+). Lysine 344, arginine 373, serine 374, and lysine 395 together coordinate (2R)-2-phosphoglycerate. Lysine 344 acts as the Proton acceptor in catalysis.

This sequence belongs to the enolase family. Mg(2+) is required as a cofactor.

Its subcellular location is the cytoplasm. It is found in the secreted. The protein resides in the cell surface. It carries out the reaction (2R)-2-phosphoglycerate = phosphoenolpyruvate + H2O. The protein operates within carbohydrate degradation; glycolysis; pyruvate from D-glyceraldehyde 3-phosphate: step 4/5. In terms of biological role, catalyzes the reversible conversion of 2-phosphoglycerate (2-PG) into phosphoenolpyruvate (PEP). It is essential for the degradation of carbohydrates via glycolysis. In Lachnospira eligens (strain ATCC 27750 / DSM 3376 / VPI C15-48 / C15-B4) (Eubacterium eligens), this protein is Enolase.